A 170-amino-acid polypeptide reads, in one-letter code: Cathelicidin antimicrobial peptide (170 aa).

Positions 1–30 (MKTQRDGHSLGRWSLVLLLLGLVMPLAIVA) are cleaved as a signal peptide. Residues 31 to 131 (QVLSYKEAVL…DISCDKDNKR (101 aa)) constitute a propeptide, cathelin-like domain (CLD). 2 disulfides stabilise this stretch: C86/C97 and C108/C125. Residues 150 to 162 (FKRIVQRIKDFLR) are active core.

The protein belongs to the cathelicidin family. Monomer, homodimer or homotrimer (in vitro). Oligomerizes as tetra- or hexamer in solution (in vitro). Proteolytically cleaved by proteinase PRTN3 into antibacterial peptide LL-37. Proteolytically cleaved by cathepsin CTSG and neutrophil elastase ELANE. In terms of processing, resistant to proteolytic degradation in solution, and when bound to both zwitterionic (mimicking mammalian membranes) and negatively charged membranes (mimicking bacterial membranes). Post-translationally, after secretion onto the skin surface, the CAMP gene product is processed by a serine protease-dependent mechanism into multiple novel antimicrobial peptides distinct from and shorter than cathelicidin LL-37. These peptides show enhanced antimicrobial action, acquiring the ability to kill skin pathogens such as S.aureus, E.coli and C.albicans. These peptides have lost the ability to stimulate CXCL8/IL8 release from keratinocytes. The peptides act synergistically, killing bacteria at lower concentrations when present together, and maintain activity at increased salt condition.

The protein localises to the secreted. It is found in the vesicle. Its function is as follows. Antimicrobial protein that is an integral component of the innate immune system. Binds to bacterial lipopolysaccharides (LPS). Acts via neutrophil N-formyl peptide receptors to enhance the release of CXCL2. Postsecretory processing generates multiple cathelicidin antimicrobial peptides with various lengths which act as a topical antimicrobial defense in sweat on skin. The unprocessed precursor form, cathelicidin antimicrobial peptide, inhibits the growth of Gram-negative E.coli and E.aerogenes with efficiencies comparable to that of the mature peptide LL-37 (in vitro). In terms of biological role, antimicrobial peptide that is an integral component of the innate immune system. Binds to bacterial lipopolysaccharides (LPS). Causes membrane permeabilization by forming transmembrane pores (in vitro). Causes lysis of E.coli. Exhibits antimicrobial activity against Gram-negative bacteria such as P.aeruginosa, S.typhimurium, E.aerogenes, E.coli and P.syringae, Gram-positive bacteria such as L.monocytogenes, S.epidermidis, S.pyogenes and S.aureus, as well as vancomycin-resistant enterococci (in vitro). Exhibits antimicrobial activity against methicillin-resistant S.aureus, P.mirabilis, and C.albicans in low-salt media, but not in media containing 100 mM NaCl (in vitro). Forms chiral supramolecular assemblies with quinolone signal (PQS) molecules of P.aeruginosa, which may lead to interference of bacterial quorum signaling and perturbance of bacterial biofilm formation. May form supramolecular fiber-like assemblies on bacterial membranes. Induces cytokine and chemokine producation as well as TNF/TNFA and CSF2/GMCSF production in normal human keratinocytes. Exhibits hemolytic activity against red blood cells. Functionally, exhibits antimicrobial activity against E.coli and B.megaterium (in vitro). The protein is Cathelicidin antimicrobial peptide of Pan troglodytes (Chimpanzee).